The primary structure comprises 396 residues: Gap junction gamma-1 protein (396 aa).

The Cytoplasmic portion of the chain corresponds to 1 to 22 (MSWSFLTRLLEEIHNHSTFVGK). Residues 23–45 (IWLTVLIVFRIVLTAVGGESIYY) form a helical membrane-spanning segment. Over 46-75 (DEQSKFVCNTEQPGCENVCYDAFAPLSHVR) the chain is Extracellular. Residues 76–95 (FWVFQIILVATPSVMYLGYA) traverse the membrane as a helical segment. The Cytoplasmic segment spans residues 96 to 175 (IHKIAKMEHG…RRIREDGLMK (80 aa)). Positions 145–165 (ELESDKENKEQSQPKPKHDGR) are disordered. The segment covering 147–156 (ESDKENKEQS) has biased composition (basic and acidic residues). A helical membrane pass occupies residues 176-198 (IYVLQLLARTVFEVGFLIGQYFL). Over 199–228 (YGFQVHPFYVCSRLPCPHKIDCFISRPTEK) the chain is Extracellular. The chain crosses the membrane as a helical span at residues 229–248 (TIFLLIMYGVTGLCLLLNIW). The Cytoplasmic segment spans residues 249–396 (EMLHLGFGTI…SGDGKTSVWI (148 aa)). The segment at 353 to 396 (VQAYSHQNNPHGPREKKAKVGSKAGSNKSTASSKSGDGKTSVWI) is disordered. Residues 376 to 387 (AGSNKSTASSKS) are compositionally biased toward polar residues.

This sequence belongs to the connexin family. Gamma-type subfamily. A connexon is composed of a hexamer of connexins. Interacts with CNST.

It localises to the cell membrane. Its subcellular location is the cell junction. The protein resides in the gap junction. Functionally, one gap junction consists of a cluster of closely packed pairs of transmembrane channels, the connexons, through which materials of low MW diffuse from one cell to a neighboring cell. The sequence is that of Gap junction gamma-1 protein (GJC1) from Homo sapiens (Human).